Consider the following 535-residue polypeptide: UDP-glucuronosyltransferase 1A1 (535 aa).

Residues Met-1–Ala-29 form the signal peptide. N-linked (GlcNAc...) asparagine glycosylation is found at Asn-89, Asn-297, and Asn-435. A helical membrane pass occupies residues Val-493–Phe-509.

The protein belongs to the UDP-glycosyltransferase family. Homodimers. Homooligomer. Interacts with UGT1A3, UGT1A4, UGT1A6, UGT1A7, UGT1A8, UGT1A9 and UGT1A10 to form heterodimers. As to expression, highly expressed in liver and at lower levels in colon, kidney, stomach and intestine.

Its subcellular location is the endoplasmic reticulum membrane. It catalyses the reaction glucuronate acceptor + UDP-alpha-D-glucuronate = acceptor beta-D-glucuronoside + UDP + H(+). The enzyme catalyses 17beta-estradiol + UDP-alpha-D-glucuronate = 17beta-estradiol 3-O-(beta-D-glucuronate) + UDP + H(+). It carries out the reaction 2-hydroxyestrone + UDP-alpha-D-glucuronate = 2-hydroxyestrone 3-O-(beta-D-glucuronate) + UDP + H(+). The catalysed reaction is 2-hydroxy-17beta-estradiol + UDP-alpha-D-glucuronate = 2-hydroxy-17beta-estradiol 3-O-(beta-D-glucuronate) + UDP + H(+). It catalyses the reaction 2-methoxy-17beta-estradiol + UDP-alpha-D-glucuronate = 2-methoxy-17beta-estradiol 3-O-(beta-D-glucuronate) + UDP + H(+). The enzyme catalyses 17alpha-estradiol + UDP-alpha-D-glucuronate = 17alpha-estradiol 3-O-(beta-D-glucuronate) + UDP + H(+). It carries out the reaction 16beta,17beta-estriol + UDP-alpha-D-glucuronate = 16beta,17beta-estriol 16-O-(beta-D-glucuronate) + UDP + H(+). The catalysed reaction is losartan + UDP-alpha-D-glucuronate = losartan-2-N-beta-D-glucuronide + UDP. It catalyses the reaction prunetin + UDP-alpha-D-glucuronate = prunetin-4'-O-beta-D-glucuronide + UDP. The enzyme catalyses SN-38 + UDP-alpha-D-glucuronate = SN-38 O-beta-D-glucuronide + UDP + H(+). It carries out the reaction (4Z,15Z)-bilirubin IXalpha + UDP-alpha-D-glucuronate = (4Z,15Z)-bilirubin IXalpha C12-beta-D-glucuronoside + UDP. The catalysed reaction is (4Z,15Z)-bilirubin IXalpha + UDP-alpha-D-glucuronate = (4Z,15Z)-bilirubin IXalpha C8-beta-D-glucuronoside + UDP. It catalyses the reaction (4Z,15Z)-bilirubin IXalpha C8-beta-D-glucuronoside + UDP-alpha-D-glucuronate = (4Z,15Z)-bilirubin IXalpha C8,C12-beta-D-bisglucuronoside + UDP. The enzyme catalyses (4Z,15Z)-bilirubin IXalpha C12-beta-D-glucuronoside + UDP-alpha-D-glucuronate = (4Z,15Z)-bilirubin IXalpha C8,C12-beta-D-bisglucuronoside + UDP. It carries out the reaction 8-iso-prostaglandin F2alpha + UDP-alpha-D-glucuronate = 8-iso-prostaglandin F2alpha-glucuronide + UDP + H(+). The catalysed reaction is (5Z,8Z,11Z,14Z)-eicosatetraenoate + UDP-alpha-D-glucuronate = O-[(5Z),(8Z),(11Z),(14Z)-eicosatetraenoyl]-beta-D-glucuronate + UDP. It catalyses the reaction 15-hydroxy-(5Z,8Z,11Z,13E)-eicosatetraenoate + UDP-alpha-D-glucuronate = 15-O-(beta-D-glucuronosyl)-(5Z,8Z,11Z,14Z)-eicosatetraenoate + UDP + H(+). The enzyme catalyses 20-hydroxy-(5Z,8Z,11Z,14Z)-eicosatetraenoate + UDP-alpha-D-glucuronate = 20-O-(beta-D-glucuronosyl)-(5Z,8Z,11Z,14Z)-eicosatetraenoate + UDP + H(+). It carries out the reaction prostaglandin B1 + UDP-alpha-D-glucuronate = 15-O-(beta-D-glucuronosyl)-prostaglandin B1 + UDP + H(+). The catalysed reaction is (E)-ferulate + UDP-alpha-D-glucuronate = (E)-4-O-(beta-D-glucuronosyl)-ferulate + UDP + H(+). It catalyses the reaction (E)-ferulate + UDP-alpha-D-glucuronate = (E)-ferulic acid beta-D-glucuronate ester + UDP. Functionally, UDP-glucuronosyltransferase (UGT) that catalyzes phase II biotransformation reactions in which lipophilic substrates are conjugated with glucuronic acid to increase the metabolite's water solubility, thereby facilitating excretion into either the urine or bile. Essential for the elimination and detoxification of drugs, xenobiotics and endogenous compounds. Catalyzes the glucuronidation of endogenous estrogen hormones such as estradiol, estrone and estriol. Involved in the glucuronidation of bilirubin, a degradation product occurring in the normal catabolic pathway that breaks down heme in vertebrates. Involved in the glucuronidation of arachidonic acid (AA) and AA-derived eicosanoids including 15-HETE, 20-HETE, PGB1 and F2-isoprostane (8-iso-PGF2alpha). Involved in the glucuronidation of the phytochemical ferulic acid at the phenolic or the carboxylic acid group. Also catalyzes the glucuronidation the isoflavones genistein, daidzein, glycitein, formononetin, biochanin A and prunetin, which are phytoestrogens with anticancer and cardiovascular properties. Involved in the glucuronidation of the AGTR1 angiotensin receptor antagonist losartan, a drug which can inhibit the effect of angiotensin II. Involved in the biotransformation of 7-ethyl-10-hydroxycamptothecin (SN-38), the pharmacologically active metabolite of the anticancer drug irinotecan. The protein is UDP-glucuronosyltransferase 1A1 of Mus musculus (Mouse).